The chain runs to 342 residues: Polygalacturonase inhibitor 1 (342 aa).

Residues 1–29 (MTQFNIPVTMSSSLSIILVILVSLRTALS) form the signal peptide. 2 cysteine pairs are disulfide-bonded: C32–C62 and C63–C72. N-linked (GlcNAc...) asparagine glycosylation occurs at N64. 10 LRR repeats span residues 82–107 (NNLDLSGHNLPKPYPIPSSLANLPYL), 108–132 (NFLYIGGINNLVGPIPPAIAKLTQL), 133–156 (HYLYITHTNVSGAIPDFLSQIKTL), 157–180 (VTLDFSYNALSGTLPPSISSLPNL), 181–205 (GGITFDGNRISGAIPDSYGSFSKLF), 206–228 (TAMTISRNRLTGKIPPTFANLNL), 229–252 (AFVDLSRNMLEGDASVLFGSDKNT), 253–275 (KKIHLAKNSLAFDLGKVGLSKNL), 276–299 (NGLDLRNNRIYGTLPQGLTQLKFL), and 300–319 (QSLNVSFNNLCGEIPQGGNL). N141 carries an N-linked (GlcNAc...) asparagine glycan. N303 carries N-linked (GlcNAc...) asparagine glycosylation. Intrachain disulfides connect C310–C332 and C334–C341.

Belongs to the polygalacturonase-inhibiting protein family.

The protein resides in the secreted. It is found in the cell wall. Its subcellular location is the membrane. Its function is as follows. Inhibitor of fungal polygalacturonase. It is an important factor for plant resistance to phytopathogenic fungi. Substrate preference is polygalacturonase (PG) from A.niger &gt;&gt; PG of F.oxysporum, A.solani or B.cinerea. Not active on PG from F.moniliforme. This chain is Polygalacturonase inhibitor 1 (PGIP1), found in Phaseolus vulgaris (Kidney bean).